We begin with the raw amino-acid sequence, 84 residues long: Small ribosomal subunit protein eS27 (84 aa).

Residues Met-1–Lys-16 show a composition bias toward basic and acidic residues. The tract at residues Met-1 to Val-25 is disordered. Ser-11 is subject to Phosphoserine. A C4-type zinc finger spans residues Pro-38–Ser-60.

This sequence belongs to the eukaryotic ribosomal protein eS27 family. Component of the small ribosomal subunit. Part of the small subunit (SSU) processome, composed of more than 70 proteins and the RNA chaperone small nucleolar RNA (snoRNA) U3. Requires Zn(2+) as cofactor.

The protein localises to the cytoplasm. It localises to the nucleus. Its subcellular location is the nucleolus. Functionally, component of the small ribosomal subunit. The ribosome is a large ribonucleoprotein complex responsible for the synthesis of proteins in the cell. Required for proper rRNA processing and maturation of 18S rRNAs. Part of the small subunit (SSU) processome, first precursor of the small eukaryotic ribosomal subunit. During the assembly of the SSU processome in the nucleolus, many ribosome biogenesis factors, an RNA chaperone and ribosomal proteins associate with the nascent pre-rRNA and work in concert to generate RNA folding, modifications, rearrangements and cleavage as well as targeted degradation of pre-ribosomal RNA by the RNA exosome. This Pongo abelii (Sumatran orangutan) protein is Small ribosomal subunit protein eS27 (RPS27).